The chain runs to 274 residues: Cytochrome b-c1 complex subunit Rieske, mitochondrial (274 aa).

Residues 29-49 (XXXXXXXXTPEPPVLDPKRPI) are disordered. Over 79–103 (SHTDIKVPDFSDYRRSEVLDKTKSS) the chain is Mitochondrial matrix. The helical transmembrane segment at 104 to 140 (RESSDARKVFSYMVTATTAVGVTYAAKSIVTQFISSM) threads the bilayer. The Mitochondrial intermembrane portion of the chain corresponds to 141-274 (SASADVLAMS…FLSDDMVVVG (134 aa)). A Rieske domain is found at 187 to 272 (EAAVELSQLR…YEFLSDDMVV (86 aa)). Cys-217, His-219, Cys-236, His-239, and Ser-241 together coordinate [2Fe-2S] cluster. The cysteines at positions 222 and 238 are disulfide-linked.

It belongs to the Rieske iron-sulfur protein family. As to quaternary structure, component of the ubiquinol-cytochrome c oxidoreductase (cytochrome b-c1 complex, complex III, CIII), a multisubunit enzyme composed of 11 subunits. The complex is composed of 3 respiratory subunits cytochrome b, cytochrome c1 and Rieske protein UQCRFS1, 2 core protein subunits UQCRC1/QCR1 and UQCRC2/QCR2, and 6 low-molecular weight protein subunits UQCRH/QCR6, UQCRB/QCR7, UQCRQ/QCR8, UQCR10/QCR9, UQCR11/QCR10 and subunit 9, the cleavage product of Rieske protein UQCRFS1. The complex exists as an obligatory dimer and forms supercomplexes (SCs) in the inner mitochondrial membrane with NADH-ubiquinone oxidoreductase (complex I, CI) and cytochrome c oxidase (complex IV, CIV), resulting in different assemblies (supercomplex SCI(1)III(2)IV(1) and megacomplex MCI(2)III(2)IV(2)). Incorporation of the Rieske protein UQCRFS1 is the penultimate step in complex III assembly. Interacts with TTC19, which is involved in the clearance of UQCRFS1 fragments. Component of the ubiquinol-cytochrome c oxidoreductase (cytochrome b-c1 complex, complex III, CIII). Subunit 9 corresponds to the mitochondrial targeting sequence (MTS) of Rieske protein UQCRFS1. It is retained after processing and incorporated inside complex III, where it remains bound to the complex and localizes between the 2 core subunits UQCRC1/QCR1 and UQCRC2/QCR2. The cofactor is [2Fe-2S] cluster. In terms of processing, proteolytic processing is necessary for the correct insertion of UQCRFS1 in the complex III dimer. Several fragments are generated during UQCRFS1 insertion, most probably due to the endogenous matrix-processing peptidase (MPP) activity of the 2 core protein subunits UQCRC1/QCR1 and UQCRC2/QCR2, which are homologous to the 2 mitochondrial-processing peptidase (MPP) subunits beta-MPP and alpha-MPP respectively. The action of the protease is also necessary for the clearance of the UQCRFS1 fragments.

It localises to the mitochondrion inner membrane. The catalysed reaction is a quinol + 2 Fe(III)-[cytochrome c](out) = a quinone + 2 Fe(II)-[cytochrome c](out) + 2 H(+)(out). Functionally, component of the ubiquinol-cytochrome c oxidoreductase, a multisubunit transmembrane complex that is part of the mitochondrial electron transport chain which drives oxidative phosphorylation. The respiratory chain contains 3 multisubunit complexes succinate dehydrogenase (complex II, CII), ubiquinol-cytochrome c oxidoreductase (cytochrome b-c1 complex, complex III, CIII) and cytochrome c oxidase (complex IV, CIV), that cooperate to transfer electrons derived from NADH and succinate to molecular oxygen, creating an electrochemical gradient over the inner membrane that drives transmembrane transport and the ATP synthase. The cytochrome b-c1 complex catalyzes electron transfer from ubiquinol to cytochrome c, linking this redox reaction to translocation of protons across the mitochondrial inner membrane, with protons being carried across the membrane as hydrogens on the quinol. In the process called Q cycle, 2 protons are consumed from the matrix, 4 protons are released into the intermembrane space and 2 electrons are passed to cytochrome c. The Rieske protein is a catalytic core subunit containing a [2Fe-2S] iron-sulfur cluster. It cycles between 2 conformational states during catalysis to transfer electrons from the quinol bound in the Q(0) site in cytochrome b to cytochrome c1. Incorporation of UQCRFS1 is the penultimate step in complex III assembly. In terms of biological role, component of the ubiquinol-cytochrome c oxidoreductase (cytochrome b-c1 complex, complex III, CIII). UQCRFS1 undergoes proteolytic processing once it is incorporated in the complex III dimer. One of the fragments, called subunit 9, corresponds to its mitochondrial targeting sequence (MTS). The proteolytic processing is necessary for the correct insertion of UQCRFS1 in the complex III dimer, but the persistence of UQCRFS1-derived fragments may prevent newly imported UQCRFS1 to be processed and assembled into complex III and is detrimental for the complex III structure and function. This chain is Cytochrome b-c1 complex subunit Rieske, mitochondrial (UQCRFS1), found in Saimiri sciureus (Common squirrel monkey).